The sequence spans 439 residues: Ribosomal protein uS12 methylthiotransferase RimO (439 aa).

The 113-residue stretch at 5–117 (KKLHLISLGC…IDELIASKQS (113 aa)) folds into the MTTase N-terminal domain. [4Fe-4S] cluster is bound by residues C14, C48, C80, C149, C153, and C156. One can recognise a Radical SAM core domain in the interval 135-363 (TGSNYHAYIK…GEIAERSTLR (229 aa)). Positions 366-437 (EKMVGKTVEL…GMQLLATLIK (72 aa)) constitute a TRAM domain.

Belongs to the methylthiotransferase family. RimO subfamily. It depends on [4Fe-4S] cluster as a cofactor.

It is found in the cytoplasm. The enzyme catalyses L-aspartate(89)-[ribosomal protein uS12]-hydrogen + (sulfur carrier)-SH + AH2 + 2 S-adenosyl-L-methionine = 3-methylsulfanyl-L-aspartate(89)-[ribosomal protein uS12]-hydrogen + (sulfur carrier)-H + 5'-deoxyadenosine + L-methionine + A + S-adenosyl-L-homocysteine + 2 H(+). Functionally, catalyzes the methylthiolation of an aspartic acid residue of ribosomal protein uS12. The protein is Ribosomal protein uS12 methylthiotransferase RimO of Sulfurovum sp. (strain NBC37-1).